Consider the following 297-residue polypeptide: Tyrosine recombinase XerC (297 aa).

Positions 1–83 (MAILDEFDEH…AVKAFTAWAK (83 aa)) constitute a Core-binding (CB) domain. One can recognise a Tyr recombinase domain in the interval 104-291 (TLPAVLRQDQ…AVSRLRVVHD (188 aa)). Active-site residues include Arg148, Lys172, His243, Arg246, and His269. Residue Tyr278 is the O-(3'-phospho-DNA)-tyrosine intermediate of the active site.

This sequence belongs to the 'phage' integrase family. XerC subfamily. In terms of assembly, forms a cyclic heterotetrameric complex composed of two molecules of XerC and two molecules of XerD.

It is found in the cytoplasm. Site-specific tyrosine recombinase, which acts by catalyzing the cutting and rejoining of the recombining DNA molecules. The XerC-XerD complex is essential to convert dimers of the bacterial chromosome into monomers to permit their segregation at cell division. It also contributes to the segregational stability of plasmids. The sequence is that of Tyrosine recombinase XerC from Mycobacterium leprae (strain TN).